The chain runs to 370 residues: tRNA-specific 2-thiouridylase MnmA 1 (370 aa).

ATP-binding positions include 9–16 (GMSGGVDS) and Met35. The interaction with target base in tRNA stretch occupies residues 95 to 97 (NPD). The active-site Nucleophile is Cys100. The cysteines at positions 100 and 196 are disulfide-linked. Residue Gly124 coordinates ATP. An interaction with tRNA region spans residues 146–148 (KDQ). Cys196 (cysteine persulfide intermediate) is an active-site residue. The tract at residues 306–307 (RY) is interaction with tRNA.

It belongs to the MnmA/TRMU family.

The protein localises to the cytoplasm. It carries out the reaction S-sulfanyl-L-cysteinyl-[protein] + uridine(34) in tRNA + AH2 + ATP = 2-thiouridine(34) in tRNA + L-cysteinyl-[protein] + A + AMP + diphosphate + H(+). Catalyzes the 2-thiolation of uridine at the wobble position (U34) of tRNA, leading to the formation of s(2)U34. This chain is tRNA-specific 2-thiouridylase MnmA 1, found in Geobacillus kaustophilus (strain HTA426).